A 504-amino-acid chain; its full sequence is ATP synthase subunit alpha, chloroplastic (504 aa).

170–177 is a binding site for ATP; sequence GDRQTGKT. The residue at position 257 (Thr-257) is a Phosphothreonine.

This sequence belongs to the ATPase alpha/beta chains family. F-type ATPases have 2 components, CF(1) - the catalytic core - and CF(0) - the membrane proton channel. CF(1) has five subunits: alpha(3), beta(3), gamma(1), delta(1), epsilon(1). CF(0) has four main subunits: a, b, b' and c.

The protein localises to the plastid. The protein resides in the chloroplast thylakoid membrane. It catalyses the reaction ATP + H2O + 4 H(+)(in) = ADP + phosphate + 5 H(+)(out). In terms of biological role, produces ATP from ADP in the presence of a proton gradient across the membrane. The alpha chain is a regulatory subunit. In Nasturtium officinale (Watercress), this protein is ATP synthase subunit alpha, chloroplastic.